A 122-amino-acid chain; its full sequence is Large ribosomal subunit protein uL14c (122 aa).

It belongs to the universal ribosomal protein uL14 family. Part of the 50S ribosomal subunit.

It localises to the plastid. It is found in the chloroplast. Binds to 23S rRNA. This chain is Large ribosomal subunit protein uL14c, found in Guizotia abyssinica (Niger).